Reading from the N-terminus, the 95-residue chain is F(1)-ATPase inhibitor IF(1), mitochondrial (95 aa).

The transit peptide at 1-25 (MLRTTVSKLARPTVSRAFATTSRAL) directs the protein to the mitochondrion. Disordered regions lie at residues 20–48 (TTSR…REKA) and 76–95 (LKTL…GERN).

It belongs to the ATPase inhibitor family. Associates with the mitochondrial small ribosomal subunit (mt-SSU). IF(1) coiled-coil forms a helical bundle with the C-terminal extension of uS17m and also binds to mS27 in the mtSSU tail. Since the C-terminal extension of uS17m stabilizing the IF(1) on the mt-SSU is specific to N.crassa, IF(1) binding might also be specific.

It localises to the mitochondrion. Functionally, endogenous F(1)F(0)-ATPase inhibitor limiting ATP depletion when the mitochondrial membrane potential falls below a threshold and the F(1)F(0)-ATP synthase starts hydrolyzing ATP to pump protons out of the mitochondrial matrix. Required to avoid the consumption of cellular ATP when the F(1)F(0)-ATP synthase enzyme acts as an ATP hydrolase. Functions through inserting its N-terminal part into the catalytically active F1-ATPase, thereby blocking its rotational movement and subsequently the ATP hydrolase activity. This Neurospora crassa (strain ATCC 24698 / 74-OR23-1A / CBS 708.71 / DSM 1257 / FGSC 987) protein is F(1)-ATPase inhibitor IF(1), mitochondrial (inh1).